Reading from the N-terminus, the 678-residue chain is DNA ligase (678 aa).

NAD(+)-binding positions include 34 to 38, 83 to 84, and Glu-114; these read DSEYD and SL. Residue Lys-116 is the N6-AMP-lysine intermediate of the active site. The NAD(+) site is built by Arg-137, Glu-176, Lys-293, and Lys-317. Positions 411, 414, 429, and 435 each coordinate Zn(2+). The BRCT domain occupies 594–678; it reads PTRQPLNGES…LMAGYGQTLS (85 aa).

Belongs to the NAD-dependent DNA ligase family. LigA subfamily. The cofactor is Mg(2+). Mn(2+) serves as cofactor.

It carries out the reaction NAD(+) + (deoxyribonucleotide)n-3'-hydroxyl + 5'-phospho-(deoxyribonucleotide)m = (deoxyribonucleotide)n+m + AMP + beta-nicotinamide D-nucleotide.. Functionally, DNA ligase that catalyzes the formation of phosphodiester linkages between 5'-phosphoryl and 3'-hydroxyl groups in double-stranded DNA using NAD as a coenzyme and as the energy source for the reaction. It is essential for DNA replication and repair of damaged DNA. This is DNA ligase from Acinetobacter baumannii (strain AB307-0294).